The primary structure comprises 388 residues: Ovalbumin-related protein Y (388 aa).

A disulfide bridge links cysteine 74 with cysteine 121. 4 N-linked (GlcNAc...) asparagine glycosylation sites follow: asparagine 95, asparagine 215, asparagine 293, and asparagine 312.

It belongs to the serpin family. Ov-serpin subfamily. N-glycosylated on at least two Asn residues by ovomucoid type carbohydrate units. In terms of processing, the N-terminus is blocked. As to expression, major protein of egg white. Expressed in the magnum of the oviduct (at protein level).

It is found in the secreted. In Gallus gallus (Chicken), this protein is Ovalbumin-related protein Y (SERPINB14B).